A 288-amino-acid polypeptide reads, in one-letter code: DegV domain-containing protein MYPU_3590 (288 aa).

The DegV domain maps to 3 to 275 (IAIVIDSSSG…LGAIAISLVK (273 aa)). Hexadecanoate-binding residues include Ser-61 and Ser-92.

Functionally, may bind long-chain fatty acids, such as palmitate, and may play a role in lipid transport or fatty acid metabolism. The sequence is that of DegV domain-containing protein MYPU_3590 from Mycoplasmopsis pulmonis (strain UAB CTIP) (Mycoplasma pulmonis).